A 158-amino-acid polypeptide reads, in one-letter code: Regulator of sigma D (158 aa).

Belongs to the Rsd/AlgQ family. As to quaternary structure, interacts with RpoD.

The protein resides in the cytoplasm. In terms of biological role, binds RpoD and negatively regulates RpoD-mediated transcription activation by preventing the interaction between the primary sigma factor RpoD with the catalytic core of the RNA polymerase and with promoter DNA. May be involved in replacement of the RNA polymerase sigma subunit from RpoD to RpoS during the transition from exponential growth to the stationary phase. This Escherichia fergusonii (strain ATCC 35469 / DSM 13698 / CCUG 18766 / IAM 14443 / JCM 21226 / LMG 7866 / NBRC 102419 / NCTC 12128 / CDC 0568-73) protein is Regulator of sigma D.